The chain runs to 334 residues: Aspartate carbamoyltransferase catalytic subunit (334 aa).

Carbamoyl phosphate is bound by residues arginine 71 and threonine 72. Residue lysine 99 coordinates L-aspartate. Carbamoyl phosphate-binding residues include arginine 121, histidine 151, and glutamine 154. Residues arginine 184 and arginine 239 each contribute to the L-aspartate site. Positions 280 and 281 each coordinate carbamoyl phosphate.

It belongs to the aspartate/ornithine carbamoyltransferase superfamily. ATCase family. As to quaternary structure, heterododecamer (2C3:3R2) of six catalytic PyrB chains organized as two trimers (C3), and six regulatory PyrI chains organized as three dimers (R2).

The enzyme catalyses carbamoyl phosphate + L-aspartate = N-carbamoyl-L-aspartate + phosphate + H(+). It participates in pyrimidine metabolism; UMP biosynthesis via de novo pathway; (S)-dihydroorotate from bicarbonate: step 2/3. Functionally, catalyzes the condensation of carbamoyl phosphate and aspartate to form carbamoyl aspartate and inorganic phosphate, the committed step in the de novo pyrimidine nucleotide biosynthesis pathway. The protein is Aspartate carbamoyltransferase catalytic subunit of Pseudomonas syringae pv. syringae (strain B728a).